The chain runs to 341 residues: MNIENKCDLAFEVTYHPLYRAAQFWTFIFSTLAVPALFIFLLKQIFPLPFHGNIKFMLISYFLSAFLFAVVLALTFGYHILVPLFITSKCDLIIQPYLFKVGQLSLTLFITLQMIMPFGFSIERIIALRMAKSYENVRTVLGPLLIFVLIGIDLILLFTVFRDESFNDSFISFILIPATTAQTFNSYCWILLYAELGNLLCNCIILLVHSKFKTKFLHQQRSLSVRYELEEISQTSKFTLIVSFTHILFIGWYLGVTIFIRTVGETFFGSYINYTVARGVYISVPTYNLTIVFVGIKALSFMNLKRQNNVQSKVQIKSTGSEGARNYENAIASYWNSVSKA.

7 helical membrane passes run 22–42 (AQFW…IFLL), 66–86 (FLFA…PLFI), 102–122 (GQLS…GFSI), 141–161 (LGPL…FTVF), 188–208 (CWIL…ILLV), 240–260 (LIVS…TIFI), and 279–299 (GVYI…IKAL).

Belongs to the nematode receptor-like protein srb family.

Its subcellular location is the membrane. This Caenorhabditis elegans protein is Serpentine receptor class beta-1 (srb-1).